Reading from the N-terminus, the 141-residue chain is Cystatin-SN (141 aa).

The first 20 residues, 1–20 (MAQYLSTLLLLLATLAVALA), serve as a signal peptide directing secretion. The short motif at 76 to 80 (QTVGG) is the Secondary area of contact element. Disulfide bonds link Cys-94/Cys-104 and Cys-118/Cys-138.

This sequence belongs to the cystatin family. In terms of tissue distribution, expressed in submandibular and sublingual saliva but not in parotid saliva (at protein level). Expressed in saliva, tears, urine and seminal fluid.

It localises to the secreted. Human saliva appears to contain several cysteine proteinase inhibitors that are immunologically related to cystatin S but that differ in their specificity due to amino acid sequence differences. Cystatin SN, with a pI of 7.5, is a much better inhibitor of papain and dipeptidyl peptidase I than is cystatin S, although both inhibit ficin equally well. In Homo sapiens (Human), this protein is Cystatin-SN (CST1).